Reading from the N-terminus, the 1373-residue chain is DNA-directed RNA polymerase subunit beta'' (1373 aa).

The Zn(2+) site is built by Cys-220, Cys-293, Cys-300, and Cys-303.

This sequence belongs to the RNA polymerase beta' chain family. RpoC2 subfamily. In terms of assembly, in plastids the minimal PEP RNA polymerase catalytic core is composed of four subunits: alpha, beta, beta', and beta''. When a (nuclear-encoded) sigma factor is associated with the core the holoenzyme is formed, which can initiate transcription. Zn(2+) is required as a cofactor.

The protein resides in the plastid. Its subcellular location is the chloroplast. It catalyses the reaction RNA(n) + a ribonucleoside 5'-triphosphate = RNA(n+1) + diphosphate. Its function is as follows. DNA-dependent RNA polymerase catalyzes the transcription of DNA into RNA using the four ribonucleoside triphosphates as substrates. The polypeptide is DNA-directed RNA polymerase subunit beta'' (Lepidium virginicum (Virginia pepperweed)).